The chain runs to 376 residues: uncharacterized protein (376 aa).

Positions 1 to 28 (MCKPRVWRIAHTIVHVGALLLGTSQLTT) are cleaved as a signal peptide. A lipid anchor (N-palmitoyl cysteine) is attached at Cys-29. Cys-29 carries S-diacylglycerol cysteine lipidation.

It belongs to the TP013X lipoprotein family.

Its subcellular location is the cell membrane. This is an uncharacterized protein from Treponema pallidum (strain Nichols).